We begin with the raw amino-acid sequence, 200 residues long: Peptidyl-tRNA hydrolase (200 aa).

A tRNA-binding site is contributed by Y15. H20 functions as the Proton acceptor in the catalytic mechanism. TRNA contacts are provided by Y66, N68, and N114.

It belongs to the PTH family. Monomer.

It localises to the cytoplasm. It carries out the reaction an N-acyl-L-alpha-aminoacyl-tRNA + H2O = an N-acyl-L-amino acid + a tRNA + H(+). In terms of biological role, hydrolyzes ribosome-free peptidyl-tRNAs (with 1 or more amino acids incorporated), which drop off the ribosome during protein synthesis, or as a result of ribosome stalling. Its function is as follows. Catalyzes the release of premature peptidyl moieties from peptidyl-tRNA molecules trapped in stalled 50S ribosomal subunits, and thus maintains levels of free tRNAs and 50S ribosomes. The chain is Peptidyl-tRNA hydrolase from Paraburkholderia xenovorans (strain LB400).